A 294-amino-acid chain; its full sequence is tRNA dimethylallyltransferase (294 aa).

10 to 17 (GPTAVGKT) is an ATP binding site. 12–17 (TAVGKT) is a binding site for substrate. The interaction with substrate tRNA stretch occupies residues 35 to 38 (DSQQ).

The protein belongs to the IPP transferase family. In terms of assembly, monomer. Mg(2+) is required as a cofactor.

It carries out the reaction adenosine(37) in tRNA + dimethylallyl diphosphate = N(6)-dimethylallyladenosine(37) in tRNA + diphosphate. Functionally, catalyzes the transfer of a dimethylallyl group onto the adenine at position 37 in tRNAs that read codons beginning with uridine, leading to the formation of N6-(dimethylallyl)adenosine (i(6)A). The sequence is that of tRNA dimethylallyltransferase from Streptococcus sanguinis (strain SK36).